The following is a 798-amino-acid chain: Penicillin-binding protein 1A (798 aa).

At 1 to 9 (MIKKIITTC) the chain is on the cytoplasmic side. A helical; Signal-anchor for type II membrane protein membrane pass occupies residues 10 to 30 (MGLNNGLALFGVGLIAIAILV). Residues 31 to 798 (TYPKLPSLDS…NNRQQLDSLF (768 aa)) lie on the Periplasmic side of the membrane. The tract at residues 50 to 218 (LTIYSSDGQV…SAYNPIVNPE (169 aa)) is transglycosylase. Residue E88 is the Proton donor; for transglycosylase activity of the active site. The interval 413–699 (TVVQEPLLQG…GTIAVPVWVE (287 aa)) is transpeptidase. S460 serves as the catalytic Acyl-ester intermediate; for transpeptidase activity. The segment at 734–798 (TSSDLALDNS…NNRQQLDSLF (65 aa)) is disordered. The span at 782–798 (LPSNTGNNNRQQLDSLF) shows a compositional bias: polar residues.

This sequence in the N-terminal section; belongs to the glycosyltransferase 51 family. In the C-terminal section; belongs to the transpeptidase family.

The protein localises to the cell inner membrane. The enzyme catalyses [GlcNAc-(1-&gt;4)-Mur2Ac(oyl-L-Ala-gamma-D-Glu-L-Lys-D-Ala-D-Ala)](n)-di-trans,octa-cis-undecaprenyl diphosphate + beta-D-GlcNAc-(1-&gt;4)-Mur2Ac(oyl-L-Ala-gamma-D-Glu-L-Lys-D-Ala-D-Ala)-di-trans,octa-cis-undecaprenyl diphosphate = [GlcNAc-(1-&gt;4)-Mur2Ac(oyl-L-Ala-gamma-D-Glu-L-Lys-D-Ala-D-Ala)](n+1)-di-trans,octa-cis-undecaprenyl diphosphate + di-trans,octa-cis-undecaprenyl diphosphate + H(+). It catalyses the reaction Preferential cleavage: (Ac)2-L-Lys-D-Ala-|-D-Ala. Also transpeptidation of peptidyl-alanyl moieties that are N-acyl substituents of D-alanine.. The protein operates within cell wall biogenesis; peptidoglycan biosynthesis. In terms of biological role, cell wall formation. Synthesis of cross-linked peptidoglycan from the lipid intermediates. The enzyme has a penicillin-insensitive transglycosylase N-terminal domain (formation of linear glycan strands) and a penicillin-sensitive transpeptidase C-terminal domain (cross-linking of the peptide subunits). This chain is Penicillin-binding protein 1A (mrcA), found in Neisseria flavescens.